Here is a 189-residue protein sequence, read N- to C-terminus: Threonylcarbamoyl-AMP synthase (189 aa).

A YrdC-like domain is found at 9–189 (ASAQRKLSVY…IDGETGKRLR (181 aa)).

The protein belongs to the SUA5 family. TsaC subfamily.

The protein resides in the cytoplasm. The catalysed reaction is L-threonine + hydrogencarbonate + ATP = L-threonylcarbamoyladenylate + diphosphate + H2O. Functionally, required for the formation of a threonylcarbamoyl group on adenosine at position 37 (t(6)A37) in tRNAs that read codons beginning with adenine. Catalyzes the conversion of L-threonine, HCO(3)(-)/CO(2) and ATP to give threonylcarbamoyl-AMP (TC-AMP) as the acyladenylate intermediate, with the release of diphosphate. In Neisseria gonorrhoeae (strain ATCC 700825 / FA 1090), this protein is Threonylcarbamoyl-AMP synthase.